The following is a 119-amino-acid chain: Ethylene-responsive proteinase inhibitor 1 (119 aa).

Positions Met1 to Ala27 are cleaved as a signal peptide. Positions Gln28–Gln48 are excised as a propeptide.

This sequence belongs to the protease inhibitor I13 (potato type I serine protease inhibitor) family.

The protein resides in the secreted. This is Ethylene-responsive proteinase inhibitor 1 from Solanum lycopersicum (Tomato).